The primary structure comprises 182 residues: Ribosome maturation factor RimM (182 aa).

The 81-residue stretch at 102–182 (EEGDYYWKDL…TIEVDWDPGF (81 aa)) folds into the PRC barrel domain.

The protein belongs to the RimM family. Binds ribosomal protein uS19.

The protein localises to the cytoplasm. In terms of biological role, an accessory protein needed during the final step in the assembly of 30S ribosomal subunit, possibly for assembly of the head region. Essential for efficient processing of 16S rRNA. May be needed both before and after RbfA during the maturation of 16S rRNA. It has affinity for free ribosomal 30S subunits but not for 70S ribosomes. This chain is Ribosome maturation factor RimM, found in Klebsiella pneumoniae (strain 342).